We begin with the raw amino-acid sequence, 131 residues long: Global transcriptional regulator Spx (131 aa).

A disulfide bond links Cys-10 and Cys-13.

This sequence belongs to the ArsC family. Spx subfamily. In terms of assembly, interacts with the C-terminal domain of the alpha subunit of the RNAP.

It is found in the cytoplasm. Under non-stress conditions, Spx is degraded by ClpXP. Efficient degradation by ClpXP requires the adapter protein SpxH/YjbH. Function, levels and solubility of Spx are affected by SpxH/YjbH aggregation and stress conditions. In terms of biological role, global transcriptional regulator that plays a key role in stress response and exerts either positive or negative regulation of genes. Acts by interacting with the C-terminal domain of the alpha subunit of the RNA polymerase (RNAP). This interaction can enhance binding of RNAP to the promoter region of target genes and stimulate their transcription, or block interaction of RNAP with activator proteins and repress transcription. Its function is as follows. Required for transcription of thioredoxin reductase (trxB). Modulates the expression of icaR, encoding a repressor of the biofilm operon icaADBC. Also controls the transcription of trfA, a gene implicated in cell wall antibiotic resistance, which in turn is required for degradation of MazE antitoxin, the unstable component of the MazEF toxin-antitoxin system, that neutralizes the endoribonuclease activity of MazF toxin. The protein is Global transcriptional regulator Spx of Staphylococcus aureus (strain NCTC 8325 / PS 47).